Here is a 56-residue protein sequence, read N- to C-terminus: Venom peptide 5 (56 aa).

A signal peptide spans 1-26; sequence MKTASFILSFVVLLIVIITWIGEVSA. A propeptide spanning residues 27–42 is cleaved from the precursor; the sequence is VSEPEPVAKATAHAAA. A disulfide bridge links cysteine 49 with cysteine 54.

Post-translationally, probably contains 1 disulfide bond, which may be crucial for activity, since the linear peptide without disulfide bond is inactive. Expressed by the venom gland.

Its subcellular location is the secreted. This chain is Venom peptide 5, found in Eumenes pomiformis (Potter wasp).